We begin with the raw amino-acid sequence, 63 residues long: Large ribosomal subunit protein bL32 (63 aa).

The tract at residues 1–23 (MATPKAKVSKSRRDKRRAQFTAR) is disordered. Positions 7 to 18 (KVSKSRRDKRRA) are enriched in basic residues.

The protein belongs to the bacterial ribosomal protein bL32 family.

This chain is Large ribosomal subunit protein bL32, found in Prosthecochloris aestuarii (strain DSM 271 / SK 413).